A 202-amino-acid polypeptide reads, in one-letter code: Outer-membrane lipoprotein carrier protein (202 aa).

A signal peptide spans 1–20 (MKKQLLIGSVLLVASSQVWA).

The protein belongs to the LolA family. As to quaternary structure, monomer.

The protein localises to the periplasm. Its function is as follows. Participates in the translocation of lipoproteins from the inner membrane to the outer membrane. Only forms a complex with a lipoprotein if the residue after the N-terminal Cys is not an aspartate (The Asp acts as a targeting signal to indicate that the lipoprotein should stay in the inner membrane). This chain is Outer-membrane lipoprotein carrier protein, found in Aeromonas salmonicida (strain A449).